The sequence spans 1200 residues: Hyalin (1200 aa).

HYR domains are found at residues 1 to 39 (SSHN…TVTA), 40 to 123 (TDTT…NVIE), 124 to 207 (VDTT…NVIE), 208 to 292 (VDTT…NVIE), 293 to 376 (VDTT…NVVE), 377 to 460 (VDTT…NVVE), 461 to 544 (VDTT…TVEE), 546 to 629 (VDTT…TVIA), 630 to 713 (VDTT…TISA), 714 to 797 (VDTT…VINA), 798 to 881 (VDTT…TIGT), 882 to 966 (VDTM…TVFA), 967 to 1050 (VDTT…TVTA), 1051 to 1133 (QDTT…TVNT), and 1134 to 1200 (QDTT…FFSD).

In terms of assembly, homooligomer in presence of calcium. In terms of processing, glycosylated.

The protein resides in the secreted. It localises to the extracellular space. The protein localises to the extracellular matrix. Functionally, major constituent of the hyaline layer. The hyaline layer of echinoderm embryos is an extraembryonic matrix that functions as a substrate for cell adhesion through early development. The protein is Hyalin of Strongylocentrotus purpuratus (Purple sea urchin).